The primary structure comprises 1087 residues: Gelsolin-related protein of 125 kDa (1087 aa).

Positions 1 to 40 are disordered; that stretch reads MEEDNIVDSKEIENNVEDKKEETPSSSPSPSSSLQQQQEE. Residues 7 to 23 are compositionally biased toward basic and acidic residues; it reads VDSKEIENNVEDKKEET. Low complexity predominate over residues 24–40; the sequence is PSSSPSPSSSLQQQQEE. Gelsolin-like repeat units lie at residues 73–146, 183–286, 335–442, and 465–538; these read PFHF…PTFL, FLFK…FSKW, GKLL…FGTE, and TQLF…DNFW. Residues 550–598 are a coiled coil; the sequence is INTFINENKEEKEKEEEEKEEEEEEEEEEEEEEEEEKDNNKTTTIIKHL. Residues 555–592 form a disordered region; it reads NENKEEKEKEEEEKEEEEEEEEEEEEEEEEEKDNNKTT. Residues 562-586 are compositionally biased toward acidic residues; sequence EKEEEEKEEEEEEEEEEEEEEEEEK. One copy of the Gelsolin-like 5 repeat lies at 614–692; it reads IFKADQINPF…EQYNESPLFK (79 aa). A coiled-coil region spans residues 710–912; sequence IISYKQKLAE…ETVNEENEVG (203 aa). 4 stretches are compositionally biased toward basic and acidic residues: residues 732–770, 779–808, 817–840, and 849–900; these read KQQQ…KEEE, EEVK…KEVN, EEVK…KEEE, and EEVK…KVNE. The segment at 732-1087 is disordered; sequence KQQQEQEQEQ…HNRSSSLTHA (356 aa). The segment covering 901–910 has biased composition (acidic residues); it reads ENETVNEENE. Polar residues-rich tracts occupy residues 925–939 and 950–961; these read ANSS…NEGS and EPITPSVVSSSG. A compositionally biased stretch (basic residues) spans 983 to 1002; it reads QGRKGGRKSHGKNQPQHKKN. Positions 1018-1040 are enriched in polar residues; that stretch reads KSLNLDIDNQSFDLNSINNNNSV. The segment covering 1047-1065 has biased composition (low complexity); the sequence is SSPLSFSSSSINSNSTHNT. The segment covering 1066 to 1080 has biased composition (basic residues); the sequence is PSKKNKNKNKKKHNR.

Belongs to the villin/gelsolin family. Interacts with rasD and abpC.

It localises to the cytoplasmic vesicle. Functionally, involved in phototaxis. Required for coupling photodetection to the locomotory machinery of slugs. May be essential in the natural environment for the propagation of spores. The chain is Gelsolin-related protein of 125 kDa (gnrA) from Dictyostelium discoideum (Social amoeba).